Here is a 272-residue protein sequence, read N- to C-terminus: MSRIAATFERLRGQRRTALIPYITAGDPYADATVDIMLAMAGAGADVIELGVPFSDPMADGPVIQKASERALAKGIGMGQVLAMVRSFREHNDTTPVVLMGYANPVERYGIDRFVADAKSAGVDGVLVVDYPPEECEAFAAQLQGADLDPIFLLAPTSTEQRMKDVGRIARGYVYYVSLKGVTGAGHLDTDAVATMLPRIREHVKVPVGVGFGIRDAATAKALAAVADAVVIGSRIVQLLEAEPRESVAAVGGTFIASIREALDSSTEGVRA.

Catalysis depends on proton acceptor residues Glu49 and Asp60.

Belongs to the TrpA family. Tetramer of two alpha and two beta chains.

The enzyme catalyses (1S,2R)-1-C-(indol-3-yl)glycerol 3-phosphate + L-serine = D-glyceraldehyde 3-phosphate + L-tryptophan + H2O. Its pathway is amino-acid biosynthesis; L-tryptophan biosynthesis; L-tryptophan from chorismate: step 5/5. The alpha subunit is responsible for the aldol cleavage of indoleglycerol phosphate to indole and glyceraldehyde 3-phosphate. This is Tryptophan synthase alpha chain from Methylibium petroleiphilum (strain ATCC BAA-1232 / LMG 22953 / PM1).